Here is a 506-residue protein sequence, read N- to C-terminus: GPI mannosyltransferase 3 (506 aa).

N-linked (GlcNAc...) asparagine glycosylation is present at Asn-115. The next 6 helical transmembrane spans lie at 180 to 200 (AFAC…LLFW), 229 to 249 (YGRL…NIIA), 257 to 277 (FVFP…SSLY), 285 to 305 (YLSQ…LLTM), 330 to 350 (FVYP…SSFS), and 358 to 378 (FFFL…RFHQ). Asn-395 carries N-linked (GlcNAc...) asparagine glycosylation.

The protein belongs to the glycosyltransferase 22 family. PIGB subfamily.

It is found in the endoplasmic reticulum membrane. Its pathway is glycolipid biosynthesis; glycosylphosphatidylinositol-anchor biosynthesis. In terms of biological role, mannosyltransferase involved in glycosylphosphatidylinositol-anchor biosynthesis. Transfers the third mannose to Man2-GlcN-acyl-PI during GPI precursor assembly. This chain is GPI mannosyltransferase 3 (gpi10), found in Schizosaccharomyces pombe (strain 972 / ATCC 24843) (Fission yeast).